The sequence spans 529 residues: Bifunctional purine biosynthesis protein PurH (529 aa).

Positions 1–148 constitute an MGS-like domain; sequence MNNARPIRRA…KNHKDTTIIV (148 aa).

Belongs to the PurH family.

The catalysed reaction is (6R)-10-formyltetrahydrofolate + 5-amino-1-(5-phospho-beta-D-ribosyl)imidazole-4-carboxamide = 5-formamido-1-(5-phospho-D-ribosyl)imidazole-4-carboxamide + (6S)-5,6,7,8-tetrahydrofolate. The enzyme catalyses IMP + H2O = 5-formamido-1-(5-phospho-D-ribosyl)imidazole-4-carboxamide. It functions in the pathway purine metabolism; IMP biosynthesis via de novo pathway; 5-formamido-1-(5-phospho-D-ribosyl)imidazole-4-carboxamide from 5-amino-1-(5-phospho-D-ribosyl)imidazole-4-carboxamide (10-formyl THF route): step 1/1. Its pathway is purine metabolism; IMP biosynthesis via de novo pathway; IMP from 5-formamido-1-(5-phospho-D-ribosyl)imidazole-4-carboxamide: step 1/1. The chain is Bifunctional purine biosynthesis protein PurH from Shewanella halifaxensis (strain HAW-EB4).